Consider the following 139-residue polypeptide: Acid shock protein (139 aa).

An N-terminal signal peptide occupies residues 1-21 (MKKVLALVVAAAMGLSSAAFA). Positions 22 to 80 (ADAVSTTQAPAATHSTAAKTTHHKKHHKAAAKPAAEQKAQAAKKHKKAEAKPAAAQKAQ) are excised as a propeptide. A compositionally biased stretch (low complexity) spans 27–40 (TTQAPAATHSTAAK). Residues 27 to 139 (TTQAPAATHS…AAKPTAQPAA (113 aa)) form a disordered region. Over residues 41-51 (TTHHKKHHKAA) the composition is skewed to basic residues. Composition is skewed to low complexity over residues 52 to 61 (AKPAAEQKAQ) and 90 to 99 (AKPAAPQKAQ). Basic residues predominate over residues 118–130 (AAKKHHKTTKHQA).

The protein belongs to the Asr family. In terms of processing, proteolytic processing gives rise to the active protein.

The protein localises to the periplasm. Required for growth and/or survival at acidic conditions. This is Acid shock protein (asr) from Klebsiella pneumoniae.